Here is a 466-residue protein sequence, read N- to C-terminus: ATP synthase subunit beta (466 aa).

152 to 159 lines the ATP pocket; that stretch reads GGAGVGKT.

This sequence belongs to the ATPase alpha/beta chains family. As to quaternary structure, F-type ATPases have 2 components, CF(1) - the catalytic core - and CF(0) - the membrane proton channel. CF(1) has five subunits: alpha(3), beta(3), gamma(1), delta(1), epsilon(1). CF(0) has three main subunits: a(1), b(2) and c(9-12). The alpha and beta chains form an alternating ring which encloses part of the gamma chain. CF(1) is attached to CF(0) by a central stalk formed by the gamma and epsilon chains, while a peripheral stalk is formed by the delta and b chains.

It localises to the cell inner membrane. The enzyme catalyses ATP + H2O + 4 H(+)(in) = ADP + phosphate + 5 H(+)(out). Its function is as follows. Produces ATP from ADP in the presence of a proton gradient across the membrane. The catalytic sites are hosted primarily by the beta subunits. The protein is ATP synthase subunit beta of Helicobacter acinonychis (strain Sheeba).